We begin with the raw amino-acid sequence, 161 residues long: RNA pyrophosphohydrolase (161 aa).

The Nudix hydrolase domain maps to 12–154 (PYRPGVGMMI…KRKLYQAVVK (143 aa)). Positions 46–67 (GGIVPGETPSIAAMREMLEEIG) match the Nudix box motif.

Belongs to the Nudix hydrolase family. RppH subfamily. It depends on a divalent metal cation as a cofactor.

Functionally, accelerates the degradation of transcripts by removing pyrophosphate from the 5'-end of triphosphorylated RNA, leading to a more labile monophosphorylated state that can stimulate subsequent ribonuclease cleavage. The sequence is that of RNA pyrophosphohydrolase from Rickettsia conorii (strain ATCC VR-613 / Malish 7).